Here is a 335-residue protein sequence, read N- to C-terminus: Holliday junction branch migration complex subunit RuvB (335 aa).

Residues 1–181 (MDRIVEIEKY…FGMQFRLEFY (181 aa)) are large ATPase domain (RuvB-L). ATP contacts are provided by residues Leu-20, Arg-21, Gly-62, Lys-65, Thr-66, Thr-67, 128 to 130 (EDY), Arg-171, Tyr-181, and Arg-218. A Mg(2+)-binding site is contributed by Thr-66. Residues 182 to 252 (KDSELALILQ…RANEALNSLG (71 aa)) form a small ATPAse domain (RuvB-S) region. Positions 255 to 335 (ELGFDAMDLR…LNYEKTLFEE (81 aa)) are head domain (RuvB-H). Positions 309 and 314 each coordinate DNA.

This sequence belongs to the RuvB family. In terms of assembly, homohexamer. Forms an RuvA(8)-RuvB(12)-Holliday junction (HJ) complex. HJ DNA is sandwiched between 2 RuvA tetramers; dsDNA enters through RuvA and exits via RuvB. An RuvB hexamer assembles on each DNA strand where it exits the tetramer. Each RuvB hexamer is contacted by two RuvA subunits (via domain III) on 2 adjacent RuvB subunits; this complex drives branch migration. In the full resolvosome a probable DNA-RuvA(4)-RuvB(12)-RuvC(2) complex forms which resolves the HJ.

It is found in the cytoplasm. It catalyses the reaction ATP + H2O = ADP + phosphate + H(+). In terms of biological role, the RuvA-RuvB-RuvC complex processes Holliday junction (HJ) DNA during genetic recombination and DNA repair, while the RuvA-RuvB complex plays an important role in the rescue of blocked DNA replication forks via replication fork reversal (RFR). RuvA specifically binds to HJ cruciform DNA, conferring on it an open structure. The RuvB hexamer acts as an ATP-dependent pump, pulling dsDNA into and through the RuvAB complex. RuvB forms 2 homohexamers on either side of HJ DNA bound by 1 or 2 RuvA tetramers; 4 subunits per hexamer contact DNA at a time. Coordinated motions by a converter formed by DNA-disengaged RuvB subunits stimulates ATP hydrolysis and nucleotide exchange. Immobilization of the converter enables RuvB to convert the ATP-contained energy into a lever motion, pulling 2 nucleotides of DNA out of the RuvA tetramer per ATP hydrolyzed, thus driving DNA branch migration. The RuvB motors rotate together with the DNA substrate, which together with the progressing nucleotide cycle form the mechanistic basis for DNA recombination by continuous HJ branch migration. Branch migration allows RuvC to scan DNA until it finds its consensus sequence, where it cleaves and resolves cruciform DNA. This is Holliday junction branch migration complex subunit RuvB from Campylobacter jejuni (strain RM1221).